The primary structure comprises 250 residues: tRNA (guanine-N(1)-)-methyltransferase (250 aa).

Residues G116 and 136-141 each bind S-adenosyl-L-methionine; that span reads IGDYVL.

This sequence belongs to the RNA methyltransferase TrmD family. As to quaternary structure, homodimer.

It is found in the cytoplasm. It carries out the reaction guanosine(37) in tRNA + S-adenosyl-L-methionine = N(1)-methylguanosine(37) in tRNA + S-adenosyl-L-homocysteine + H(+). Its function is as follows. Specifically methylates guanosine-37 in various tRNAs. The protein is tRNA (guanine-N(1)-)-methyltransferase of Pseudomonas savastanoi pv. phaseolicola (strain 1448A / Race 6) (Pseudomonas syringae pv. phaseolicola (strain 1448A / Race 6)).